The sequence spans 359 residues: MRQIMIAVAIAVAVSILLTPALIRLFTKQGFGHQIREDGPPSHHSKRGTPSMGGVAILAGIWAGYFGTHLAGLAFDGEGITASGLLVLGLATSLGGVGFLDDLIKLRRSRNLGLNKTAKTVGQITSAVLFAVLVLQFRNPAGLAPASAELSYVREIATVTLTPALFVLFCVLVVSAWSNAVNFTDGLDGLAAGCMAMVTGAYVLITFWQDHNACVTAPGLGCYNVRDPLDLALIAAATAGACIGFLWWNAAPAKIFMGDTGSLALGGIIAGLSVTSRTEILAVVLGALFVAEITSVVLQILTFRTTGRRVFRMAPFHHHFELVGWAETTVIIRFWLLTAITCGLGVALFYGEWLAAIGA.

10 helical membrane-spanning segments follow: residues 3-23 (QIMIAVAIAVAVSILLTPALI), 55-75 (VAILAGIWAGYFGTHLAGLAF), 80-100 (ITASGLLVLGLATSLGGVGFL), 117-137 (TAKTVGQITSAVLFAVLVLQF), 156-176 (IATVTLTPALFVLFCVLVVSA), 187-207 (LDGLAAGCMAMVTGAYVLITF), 231-251 (LALIAAATAGACIGFLWWNAA), 255-275 (IFMGDTGSLALGGIIAGLSVT), 280-300 (ILAVVLGALFVAEITSVVLQI), and 334-354 (FWLLTAITCGLGVALFYGEWL).

Belongs to the glycosyltransferase 4 family. MraY subfamily. Requires Mg(2+) as cofactor.

It is found in the cell inner membrane. It catalyses the reaction UDP-N-acetyl-alpha-D-muramoyl-L-alanyl-gamma-D-glutamyl-meso-2,6-diaminopimeloyl-D-alanyl-D-alanine + di-trans,octa-cis-undecaprenyl phosphate = di-trans,octa-cis-undecaprenyl diphospho-N-acetyl-alpha-D-muramoyl-L-alanyl-D-glutamyl-meso-2,6-diaminopimeloyl-D-alanyl-D-alanine + UMP. It participates in cell wall biogenesis; peptidoglycan biosynthesis. Its function is as follows. Catalyzes the initial step of the lipid cycle reactions in the biosynthesis of the cell wall peptidoglycan: transfers peptidoglycan precursor phospho-MurNAc-pentapeptide from UDP-MurNAc-pentapeptide onto the lipid carrier undecaprenyl phosphate, yielding undecaprenyl-pyrophosphoryl-MurNAc-pentapeptide, known as lipid I. The sequence is that of Phospho-N-acetylmuramoyl-pentapeptide-transferase from Mycobacterium marinum (strain ATCC BAA-535 / M).